We begin with the raw amino-acid sequence, 173 residues long: DELTA-actitoxin-Oor1b (173 aa).

The segment at 6-25 (GAALGFNVHQTVLKALGQVS) is N-terminal region. 6 residues coordinate phosphocholine: serine 49, valine 82, serine 100, proline 102, tyrosine 128, and tyrosine 133. The segment at 100–115 (SVPFDYNLYSNWWDVK) is trp-rich region, which is important for the binding to lipid membrane.

Belongs to the actinoporin family. Sea anemone subfamily. In terms of assembly, octamer or nonamer in membranes. Monomer in the soluble state.

It localises to the secreted. The protein localises to the nematocyst. Its subcellular location is the target cell membrane. Functionally, pore-forming protein that forms cations-selective hydrophilic pores of around 1 nm and causes cardiac stimulation and cytolysis. Pore formation is a multi-step process that involves specific recognition of membrane sphingomyelin (but neither cholesterol nor phosphatidylcholine) using aromatic rich region and adjacent phosphocholine (POC) binding site, firm binding to the membrane (mainly driven by hydrophobic interactions) accompanied by the transfer of the N-terminal region to the lipid-water interface and finally pore formation after oligomerization of monomers. Cytolytic effects include red blood cells hemolysis, platelet aggregation and lysis, cytotoxic and cytostatic effects on fibroblasts. Lethality in mammals has been ascribed to severe vasospasm of coronary vessels, cardiac arrhythmia, and inotropic effects. The protein is DELTA-actitoxin-Oor1b of Oulactis orientalis (Japan anemone).